A 507-amino-acid chain; its full sequence is Anthranilate synthase component 1 (507 aa).

Ser65 is a binding site for L-tryptophan. Ser81 is modified (phosphoserine). Phosphothreonine is present on Thr223. 280–282 (PYL) contributes to the L-tryptophan binding site. A chorismate-binding site is contributed by 316–317 (GT). Glu343 lines the Mg(2+) pocket. Residues Tyr431, Arg452, 466-468 (GGG), and Gly468 each bind chorismate. Glu481 is a binding site for Mg(2+).

The protein belongs to the anthranilate synthase component I family. As to quaternary structure, tetramer of two components I and two components II. Requires Mg(2+) as cofactor.

The enzyme catalyses chorismate + L-glutamine = anthranilate + pyruvate + L-glutamate + H(+). It functions in the pathway amino-acid biosynthesis; L-tryptophan biosynthesis; L-tryptophan from chorismate: step 1/5. The sequence is that of Anthranilate synthase component 1 (TRP2) from Saccharomyces cerevisiae (strain ATCC 204508 / S288c) (Baker's yeast).